Consider the following 643-residue polypeptide: Phosphatidylinositol-3,5-bisphosphate 3-phosphatase MTMR2 (643 aa).

The segment at 1–52 (MEKSSSCESLGAQLPAARLPSEDSLSSASTSHSENSVHTKSASAISSDSIST) is disordered. 2 positions are modified to phosphoserine: Ser6 and Ser9. A compositionally biased stretch (polar residues) spans 23-40 (DSLSSASTSHSENSVHTK). The span at 41–52 (SASAISSDSIST) shows a compositional bias: low complexity. Ser58 is subject to Phosphoserine. The region spanning 68–139 (NKLAEMEEPA…GVISRVEKIG (72 aa)) is the GRAM domain. Residues 205-580 (GWKLYDPLLE…RHLELWVGYY (376 aa)) enclose the Myotubularin phosphatase domain. A 1,2-diacyl-sn-glycero-3-phospho-(1D-myo-inositol-3,5-bisphosphate)-binding residues include Asn330, Asn355, and Ile356. Positions 330, 355, and 356 each coordinate a 1,2-diacyl-sn-glycero-3-phospho-(1D-myo-inositol-3-phosphate). The Phosphocysteine intermediate role is filled by Cys417. Positions 418, 419, 420, 421, 422, 423, 459, and 463 each coordinate a 1,2-diacyl-sn-glycero-3-phospho-(1D-myo-inositol-3,5-bisphosphate). A 1,2-diacyl-sn-glycero-3-phospho-(1D-myo-inositol-3-phosphate) is bound by residues Ser418, Asp419, Gly420, Trp421, Asp422, and Arg423. Residue Arg463 participates in a 1,2-diacyl-sn-glycero-3-phospho-(1D-myo-inositol-3-phosphate) binding. Positions 593–627 (IHSRYKELLAKRAELQRKVEELQREISNRSTSSSE) form a coiled coil. Positions 614–643 (LQREISNRSTSSSERASSPAQCVTPVQTVV) are disordered. Residues 620–631 (NRSTSSSERASS) are compositionally biased toward low complexity. Over residues 632–643 (PAQCVTPVQTVV) the composition is skewed to polar residues.

Belongs to the protein-tyrosine phosphatase family. Non-receptor class myotubularin subfamily. In terms of assembly, homodimer (via coiled-coil domain). Heterotetramer consisting of one MTMR2 dimer and one SBF2/MTMR13 dimer; specifically in peripheral nerves stabilizes SBF2/MTMR13 at the membranes and increases MTMR2 catalytic activity towards phosphatidylinositol 3,5-bisphosphate and to a lesser extent towards phosphatidylinositol 3-phosphate. Heterodimer with SBF1/MTMR5; acts as an adapter for the phosphatase MTMR2 to regulate MTMR2 catalytic activity and subcellular location. Heterodimer with MTMR12. Post-translationally, phosphorylation at Ser-58 decreases MTMR2 localization to endocytic vesicular structures. In terms of tissue distribution, expressed in sciatic nerve and in Schwann cells (at protein level). Detected in adult dorsal root ganglia, neurons of the central nervous system, motor neurons, cell soma and neurites of sensory neurons, olfactory bulb, cerebellum and hippocampus.

It localises to the cytoplasm. It is found in the early endosome membrane. The protein localises to the perinuclear region. Its subcellular location is the cell projection. The protein resides in the axon. It localises to the endosome membrane. The catalysed reaction is a 1,2-diacyl-sn-glycero-3-phospho-(1D-myo-inositol-3,5-bisphosphate) + H2O = a 1,2-diacyl-sn-glycero-3-phospho-(1D-myo-inositol-5-phosphate) + phosphate. It catalyses the reaction a 1,2-diacyl-sn-glycero-3-phospho-(1D-myo-inositol-3-phosphate) + H2O = a 1,2-diacyl-sn-glycero-3-phospho-(1D-myo-inositol) + phosphate. The enzyme catalyses 1,2-dioctanoyl-sn-glycero-3-phospho-(1-D-myo-inositol-3-phosphate) + H2O = 1,2-dioctanoyl-sn-glycero-3-phospho-(1D-myo-inositol) + phosphate. It carries out the reaction 1,2-dioctanoyl-sn-glycero-3-phospho-(1D-myo-inositol-3,5-bisphosphate) + H2O = 1,2-dioctanoyl-sn-glycero-3-phospho-(1D-myo-inositol-5-phosphate) + phosphate. Functionally, lipid phosphatase that specifically dephosphorylates the D-3 position of phosphatidylinositol 3-phosphate and phosphatidylinositol 3,5-bisphosphate, generating phosphatidylinositol and phosphatidylinositol 5-phosphate. Regulates the level of these phosphoinositides critical for various biological processes including autophagy initiation and autophagosome maturation. This chain is Phosphatidylinositol-3,5-bisphosphate 3-phosphatase MTMR2, found in Mus musculus (Mouse).